Here is a 510-residue protein sequence, read N- to C-terminus: Polyamine aminopropyltransferase 2 (510 aa).

Transmembrane regions (helical) follow at residues 6 to 26 (ALLV…ELIA), 38 to 58 (ILQF…GSWV), 74 to 94 (LELL…LLFA), 102 to 122 (LVLY…IPLV), 140 to 160 (VLTF…LVLA), and 165 to 185 (LVRT…WTLW). One can recognise a PABS domain in the interval 205–449 (AGMVGAALLA…GEWGFILAAP (245 aa)). The spermidine synthase stretch occupies residues 207–456 (MVGAALLAGF…AAPGRADFRP (250 aa)). Q244 lines the S-methyl-5'-thioadenosine pocket. Spermidine is bound by residues H274 and D298. S-methyl-5'-thioadenosine-binding positions include D318 and 352–353 (DA). D370 (proton acceptor) is an active-site residue.

This sequence belongs to the spermidine/spermine synthase family. Homodimer or homotetramer.

The protein resides in the cell membrane. It catalyses the reaction S-adenosyl 3-(methylsulfanyl)propylamine + putrescine = S-methyl-5'-thioadenosine + spermidine + H(+). Its pathway is amine and polyamine biosynthesis; spermidine biosynthesis; spermidine from putrescine: step 1/1. Functionally, catalyzes the irreversible transfer of a propylamine group from the amino donor S-adenosylmethioninamine (decarboxy-AdoMet) to putrescine (1,4-diaminobutane) to yield spermidine. This chain is Polyamine aminopropyltransferase 2, found in Ralstonia nicotianae (strain ATCC BAA-1114 / GMI1000) (Ralstonia solanacearum).